The primary structure comprises 350 residues: Protein disulfide isomerase Creld2 (350 aa).

The N-terminal stretch at M1–A22 is a signal peptide. Positions C29–C32 match the CXXC motif. Disulfide bonds link C29–C32, C138–C152, C146–C164, and C166–C175. An EGF-like 1 domain is found at D134–I176. The FU 1 repeat unit spans residues H191–P238. An N-linked (GlcNAc...) asparagine glycan is attached at N249. Residues S251–A298 form an FU 2 repeat. Positions C261–C264 match the CXXC motif. Intrachain disulfides connect C261-C264, C292-C306, C299-C315, and C317-C328. One can recognise an EGF-like 2; calcium-binding domain in the interval D288–V329.

The protein belongs to the CRELD family. As to quaternary structure, interacts with CHRNA4. Component of a complex containing at least CRELD2, MANF, MATN3 and PDIA4. As to expression, expressed in chondrocytes (at protein level).

Its subcellular location is the endoplasmic reticulum. The catalysed reaction is Catalyzes the rearrangement of -S-S- bonds in proteins.. Protein disulfide isomerase. Might play a role in the unfolded protein response. May regulate transport of alpha4-beta2 neuronal acetylcholine receptor. This is Protein disulfide isomerase Creld2 (Creld2) from Mus musculus (Mouse).